Here is a 525-residue protein sequence, read N- to C-terminus: GMP synthase [glutamine-hydrolyzing] (525 aa).

Residues 9–207 form the Glutamine amidotransferase type-1 domain; sequence RILILDFGSQ…VQDICGCEAL (199 aa). C86 (nucleophile) is an active-site residue. Catalysis depends on residues H181 and E183. Residues 208 to 400 form the GMPS ATP-PPase domain; that stretch reads WTASNIVEDA…LGLPYDMVYR (193 aa). 235–241 serves as a coordination point for ATP; sequence SGGVDSS.

In terms of assembly, homodimer.

It carries out the reaction XMP + L-glutamine + ATP + H2O = GMP + L-glutamate + AMP + diphosphate + 2 H(+). It participates in purine metabolism; GMP biosynthesis; GMP from XMP (L-Gln route): step 1/1. Its function is as follows. Catalyzes the synthesis of GMP from XMP. In Pseudomonas putida (strain GB-1), this protein is GMP synthase [glutamine-hydrolyzing].